Reading from the N-terminus, the 62-residue chain is Sperm protamine P1 (62 aa).

The disordered stretch occupies residues 1 to 62; sequence MARYRHSRSR…RYSRRRRRRY (62 aa).

It belongs to the protamine P1 family. As to expression, testis.

The protein localises to the nucleus. The protein resides in the chromosome. Its function is as follows. Protamines substitute for histones in the chromatin of sperm during the haploid phase of spermatogenesis. They compact sperm DNA into a highly condensed, stable and inactive complex. The polypeptide is Sperm protamine P1 (PRM1) (Bettongia penicillata (Brush-tailed bettong)).